Here is a 316-residue protein sequence, read N- to C-terminus: Coiled-coil domain-containing protein 130 homolog (316 aa).

Positions 182–203 form a coiled coil; the sequence is ANSRLRAEFRQQKKEINGQQEL. The interval 287-316 is disordered; that stretch reads KLEETTSSATNEKPISLVGDYSSSDNDSNG.

The protein belongs to the CWC16 family.

The sequence is that of Coiled-coil domain-containing protein 130 homolog from Drosophila melanogaster (Fruit fly).